The primary structure comprises 510 residues: Indoleacetate--CoA ligase (510 aa).

This sequence belongs to the ATP-dependent AMP-binding enzyme family. As to quaternary structure, monomer.

The enzyme catalyses (indol-3-yl)acetate + ATP + CoA = (indol-3-yl)acetyl-CoA + AMP + diphosphate. The catalysed reaction is (indol-3-yl)acetate + ATP + H(+) = (indol-3-yl)acetyl-AMP + diphosphate. It carries out the reaction (indol-3-yl)acetyl-AMP + CoA = (indol-3-yl)acetyl-CoA + AMP + H(+). With respect to regulation, inhibited by high concentrations of substrates, and by the synthetic auxin compound 2,4-dichlorophenoxyacetate (2,4-D), which does not serve as substrate. Involved in degradation of indoleacetate, the most common member of the auxin class of plant hormones. Highly specific indoleacetate-CoA ligase which catalyzes the ATP-dependent activation of indoleacetate (IAA) to indoleacetyl-CoA. Also activates some closely related compounds such as the non-physiological compound (2-naphthyl)acetate and phenylacetate, which seems to be a fortuitous substrate for IaaB. The protein is Indoleacetate--CoA ligase of Aromatoleum aromaticum (strain DSM 19018 / LMG 30748 / EbN1) (Azoarcus sp. (strain EbN1)).